A 156-amino-acid polypeptide reads, in one-letter code: Transcriptional repressor NrdR (156 aa).

A zinc finger spans residues 3–34; it reads CPYCGETEDKVIDSRQGKEADVIRRRRECLSC. Residues 49–139 enclose the ATP-cone domain; sequence LVIIKKDGRR…VYREFKHVND (91 aa).

Belongs to the NrdR family. It depends on Zn(2+) as a cofactor.

Negatively regulates transcription of bacterial ribonucleotide reductase nrd genes and operons by binding to NrdR-boxes. In Desulfatibacillum aliphaticivorans, this protein is Transcriptional repressor NrdR.